The following is a 358-amino-acid chain: WD repeat-containing protein 53 (358 aa).

5 WD repeats span residues 8-47, 92-131, 134-174, 195-234, and 239-278; these read GHSS…GHMQ, VNEE…VTRS, RHSN…PVWI, LNPA…CERE, and GHTL…EKLQ. Positions 288-309 are disordered; the sequence is KKAKRAACPTQGGNSRAPGAED.

Belongs to the WD repeat WDR53 family.

The sequence is that of WD repeat-containing protein 53 (Wdr53) from Mus musculus (Mouse).